The chain runs to 148 residues: 3-dehydroquinate dehydratase (148 aa).

Tyrosine 26 functions as the Proton acceptor in the catalytic mechanism. Residues asparagine 75, histidine 81, and aspartate 88 each contribute to the substrate site. Histidine 101 (proton donor) is an active-site residue. Substrate contacts are provided by residues 102–103 and arginine 112; that span reads LS.

This sequence belongs to the type-II 3-dehydroquinase family. As to quaternary structure, homododecamer.

It carries out the reaction 3-dehydroquinate = 3-dehydroshikimate + H2O. It participates in metabolic intermediate biosynthesis; chorismate biosynthesis; chorismate from D-erythrose 4-phosphate and phosphoenolpyruvate: step 3/7. In terms of biological role, catalyzes a trans-dehydration via an enolate intermediate. This is 3-dehydroquinate dehydratase from Shewanella frigidimarina (strain NCIMB 400).